The primary structure comprises 549 residues: Probable glucomannan 4-beta-mannosyltransferase 4 (549 aa).

A helical transmembrane segment spans residues 35 to 55 (VAPVLQFAVWACMAMSVMLVL). The active site involves Asp-151. 2 residues coordinate substrate: Asp-210 and Asp-212. Asp-304 is a catalytic residue. The next 4 membrane-spanning stretches (helical) occupy residues 383-403 (VVAPILTFLFYCVVIPLSVMV), 406-426 (VSIPVWGMVYIPTAITIMNAI), 497-517 (IYIPELMVAFYLLVCASYDLV), and 523-543 (YYLYIYLQAFAFIALGFGFAG).

It belongs to the glycosyltransferase 2 family. Plant cellulose synthase-like A subfamily.

It localises to the golgi apparatus membrane. It catalyses the reaction GDP-mannose + (glucomannan)n = GDP + (glucomannan)n+1.. In terms of biological role, probable mannan synthase which consists of a 4-beta-mannosyltransferase activity on mannan using GDP-mannose. The beta-1,4-mannan product is the backbone for galactomannan synthesis by galactomannan galactosyltransferase. Galactomannan is a noncellulosic polysaccharides of plant cell wall. The protein is Probable glucomannan 4-beta-mannosyltransferase 4 of Oryza sativa subsp. japonica (Rice).